The following is a 317-amino-acid chain: Mitochondrial thiamine pyrophosphate carrier 1 (317 aa).

The next 6 membrane-spanning stretches (helical) occupy residues 15–37 (TVSWYNSVIAGSVSGVFARMATA), 80–100 (IPATAMYVVYGAVQFGSYSWF), 118–138 (LTVGALAGMTSSVVSYPLDLL), 168–190 (GFFTGISTAMTTVTLSTAIMFLT), 205–227 (FWSRPVSASSGIIAGFVSKTMVF), and 281–300 (GLTMGLCKSVPTTAISLFVY). Solcar repeat units follow at residues 16-103 (VSWY…FNNV), 112-197 (SQQG…VNIV), and 206-306 (WSRP…TMDL).

It belongs to the mitochondrial carrier (TC 2.A.29) family.

The protein localises to the mitochondrion inner membrane. In terms of biological role, mitochondrial transporter that mediates uptake of thiamine pyrophosphate (ThPP) into mitochondria. The sequence is that of Mitochondrial thiamine pyrophosphate carrier 1 (TPC1) from Kluyveromyces lactis (strain ATCC 8585 / CBS 2359 / DSM 70799 / NBRC 1267 / NRRL Y-1140 / WM37) (Yeast).